The primary structure comprises 261 residues: Adenosylcobinamide-GDP ribazoletransferase (261 aa).

The next 5 helical transmembrane spans lie at 12–32 (NLFF…WVVI), 46–66 (LVGL…QLIL), 67–87 (PASI…GAFH), 120–140 (GALS…ELAL), and 199–219 (IFVL…TLWL).

It belongs to the CobS family. Requires Mg(2+) as cofactor.

It localises to the cell inner membrane. It catalyses the reaction alpha-ribazole + adenosylcob(III)inamide-GDP = adenosylcob(III)alamin + GMP + H(+). The catalysed reaction is alpha-ribazole 5'-phosphate + adenosylcob(III)inamide-GDP = adenosylcob(III)alamin 5'-phosphate + GMP + H(+). Its pathway is cofactor biosynthesis; adenosylcobalamin biosynthesis; adenosylcobalamin from cob(II)yrinate a,c-diamide: step 7/7. In terms of biological role, joins adenosylcobinamide-GDP and alpha-ribazole to generate adenosylcobalamin (Ado-cobalamin). Also synthesizes adenosylcobalamin 5'-phosphate from adenosylcobinamide-GDP and alpha-ribazole 5'-phosphate. This Shewanella frigidimarina (strain NCIMB 400) protein is Adenosylcobinamide-GDP ribazoletransferase.